The chain runs to 172 residues: MKIYKDIITGDEMFADTYKMKLVDDVIYEVYGKLITRQGDDIKLEGANASAEEADEGTDITSESGVDVVLNHRLTECFAFGDKKSYTLYLKDYMKKVLAKLEEKSPDQVDIFKTNMNKAMKDILGRFKELQFFTGESMDCDGMVALVEYREINGDSVPVLMFFKHGLEEEKC.

A TCTP domain is found at 1 to 172; the sequence is MKIYKDIITG…FKHGLEEEKC (172 aa). S50 is subject to Phosphoserine. Residues T58 and T61 each carry the phosphothreonine modification.

Belongs to the TCTP family.

It localises to the cytoplasm. Its function is as follows. Involved in calcium binding and microtubule stabilization. The chain is Translationally-controlled tumor protein homolog (Tctp) from Drosophila melanogaster (Fruit fly).